Here is a 143-residue protein sequence, read N- to C-terminus: Oxoglutarate dehydrogenase inhibitor (143 aa).

Thr-14 is subject to Phosphothreonine. Low complexity predominate over residues 29–38; sequence GAGAATASGS. The interval 29 to 50 is disordered; that stretch reads GAGAATASGSDVTPPAGAGMLV. An FHA domain is found at 68–117; sequence TTAGRHPESDIFLDDVTVSRRHAEFRRQDGSFEVVDVGSLNGTYVNREPR.

It is found in the cytoplasm. An essential component of the PknG signaling pathway. When unphosphorylated, it inhibits the activity of 2-oxoglutarate dehydrogenase. When phosphorylated it does not inhibit 2-oxoglutarate dehydrogenase. The chain is Oxoglutarate dehydrogenase inhibitor (odhI) from Corynebacterium diphtheriae (strain ATCC 700971 / NCTC 13129 / Biotype gravis).